We begin with the raw amino-acid sequence, 598 residues long: Phenylalanine--tRNA ligase beta subunit, cytoplasmic (598 aa).

The region spanning 303–383 (LAVYDMEVPL…IAYGFNNIPT (81 aa)) is the B5 domain. Residues Asp361, Asp367, Glu370, and Asp371 each contribute to the Mg(2+) site.

It belongs to the phenylalanyl-tRNA synthetase beta subunit family. Type 2 subfamily. As to quaternary structure, tetramer of two alpha and two beta subunits. It depends on Mg(2+) as a cofactor.

It localises to the cytoplasm. The protein localises to the cytosol. It carries out the reaction tRNA(Phe) + L-phenylalanine + ATP = L-phenylalanyl-tRNA(Phe) + AMP + diphosphate + H(+). The sequence is that of Phenylalanine--tRNA ligase beta subunit, cytoplasmic from Arabidopsis thaliana (Mouse-ear cress).